Consider the following 1248-residue polypeptide: Structural polyprotein (1248 aa).

The span at 1 to 10 (MEFIPTQTFY) shows a compositional bias: polar residues. The interval 1 to 104 (MEFIPTQTFY…KKKKPGRRER (104 aa)) is disordered. Residues 36-68 (RKAGQLAQLISAVNKLTMRAVPQQKPRKNRKNK) are host transcription inhibition. A compositionally biased stretch (basic residues) spans 60–72 (KPRKNRKNKKQKQ). Positions 61–99 (PRKNRKNKKQKQKQQAPRNNMNQKKQPPKKKPAQKKKKP) match the Nuclear localization signal motif. The span at 73-85 (KQQAPRNNMNQKK) shows a compositional bias: low complexity. The tract at residues 84–114 (KKQPPKKKPAQKKKKPGRRERMCMKIENDCI) is binding to the viral RNA. Residues 86 to 101 (QPPKKKPAQKKKKPGR) are compositionally biased toward basic residues. The ribosome-binding stretch occupies residues 99–113 (PGRRERMCMKIENDC). Cys-113 and Cys-128 are disulfide-bonded. The region spanning 113-261 (CIFEVKHEGK…KITPEGAEEW (149 aa)) is the Peptidase S3 domain. Catalysis depends on His-139, which acts as the Charge relay system. A Nuclear export signal motif is present at residues 144–154 (IDNADLAKLAF). The interaction with spike glycoprotein E2 stretch occupies residues 155–160 (KRSSKY). Residue Asp-161 is the Charge relay system of the active site. The tract at residues 183-193 (PEGYYNWHHGA) is dimerization of the capsid protein. The Charge relay system role is filled by Ser-213. Residues 219-223 (DNKGR) form a dimerization of the capsid protein region. The segment at 262–274 (SLAIPVMCLLANT) is functions as an uncleaved signal peptide for the precursor of protein E3/E2. Residues 262–692 (SLAIPVMCLL…YYYELYPTMT (431 aa)) lie on the Extracellular side of the membrane. Intrachain disulfides connect Cys-269-Cys-278, Cys-283-Cys-287, Cys-286-Cys-318, Cys-344-Cys-450, Cys-347-Cys-353, Cys-416-Cys-430, Cys-478-Cys-591, Cys-526-Cys-550, and Cys-528-Cys-545. The N-linked (GlcNAc...) asparagine; by host glycan is linked to Asn-273. Interaction with host Mxra8 receptor stretches follow at residues 351–354 (HSCH) and 387–389 (HDW). 2 interaction with host Mxra8 receptor regions span residues 509–512 (QSGN) and 541–547 (VINNCKV). N-linked (GlcNAc...) asparagine; by host glycosylation is found at Asn-588 and Asn-670. The helical transmembrane segment at 693-713 (VVVVSVASFVLLSMVGVAVGM) threads the bilayer. At 714–748 (CMCARRRCITPYELTPGATVPFLLSLICCIRTAKA) the chain is on the cytoplasmic side. Residues 716 to 720 (CARRR) are interaction with the capsid protein. 3 S-palmitoyl cysteine; by host lipidation sites follow: Cys-721, Cys-741, and Cys-742. The segment at 721 to 741 (CITPYELTPGATVPFLLSLIC) is transient transmembrane before p62-6K protein processing. A disulfide bridge links Cys-721 with Cys-742. Residues 749–763 (ATYQEAAVYLWNEQQ) lie on the Extracellular side of the membrane. The helical transmembrane segment at 764-784 (PLFWLQAIIPLAALIVLCNCL) threads the bilayer. Topologically, residues 785-795 (RLLPCCCKTLT) are cytoplasmic. The helical transmembrane segment at 796 to 816 (FLAVMSVGAHTVSAYEHVTVI) threads the bilayer. The Extracellular segment spans residues 817-1224 (PNTVGVPYKT…AMSWVQKITG (408 aa)). Disulfide bonds link Cys-858–Cys-923, Cys-871–Cys-903, and Cys-877–Cys-887. The tract at residues 893–910 (VYPFMWGGAYCFCDTENT) is E1 fusion peptide loop. Asn-950 and Asn-1079 each carry an N-linked (GlcNAc...) asparagine; by host glycan. Cystine bridges form between Cys-1068-Cys-1080, Cys-1110-Cys-1185, Cys-1115-Cys-1189, and Cys-1137-Cys-1179. A helical transmembrane segment spans residues 1225–1245 (GVGLVVAVAALILIVVLCVSF). A lipid anchor (S-palmitoyl cysteine; by host) is attached at Cys-1242. Topologically, residues 1246–1248 (SRH) are cytoplasmic.

Homodimer. Homomultimer. Interacts with host karyopherin KPNA4; this interaction allows the nuclear import of the viral capsid protein. Interacts with spike glycoprotein E2. Interacts with host IRAK1; the interaction leads to inhibition of IRAK1-dependent signaling. In terms of assembly, the precursor of protein E3/E2 and E1 form a heterodimer shortly after synthesis. As to quaternary structure, interacts with spike glycoprotein E2. The precursor of protein E3/E2 and E1 form a heterodimer shortly after synthesis. Processing of the precursor of protein E3/E2 into E2 and E3 results in a heterodimer of the spike glycoproteins E2 and E1. Spike at virion surface are constituted of three E2-E1 heterodimers. After target cell attachment and endocytosis, E1 change conformation to form homotrimers. Interacts with 6K protein. Interacts with host MXRA8; this interaction mediates virus entry. The interaction involves 2 adjacent E2-E1 heterodimers. Interacts with spike glycoprotein E1. Processing of the precursor of protein E3/E2 into E2 and E3 results in a heterodimer of the spike glycoproteins E2 and E1. Spike at virion surface are constituted of a trimer of E2-E1 heterodimers. Interacts with 6K protein. Interacts with host MXRA8; this interaction mediates virus entry. The interaction involves 2 adjacent E2-E1 heterodimers. In terms of assembly, oligomer. Interacts with spike glycoprotein E1. Interacts with spike glycoprotein E2. In terms of processing, structural polyprotein: Specific enzymatic cleavages in vivo yield mature proteins. Capsid protein is auto-cleaved during polyprotein translation, unmasking a signal peptide at the N-terminus of the precursor of E3/E2. The remaining polyprotein is then targeted to the host endoplasmic reticulum, where host signal peptidase cleaves it into pE2, 6K and E1 proteins. pE2 is further processed to mature E3 and E2 by host furin in trans-Golgi vesicle. Post-translationally, palmitoylated via thioester bonds. These palmitoylations may induce disruption of the C-terminus transmembrane. This would result in the reorientation of E2 C-terminus from lumenal to cytoplasmic side. N-glycosylated. In terms of processing, palmitoylated via thioester bonds.

Its subcellular location is the virion. It is found in the host cytoplasm. It localises to the host cell membrane. The protein localises to the host nucleus. The protein resides in the virion membrane. Its subcellular location is the host Golgi apparatus. It is found in the host trans-Golgi network. It localises to the host endoplasmic reticulum. The enzyme catalyses Autocatalytic release of the core protein from the N-terminus of the togavirus structural polyprotein by hydrolysis of a -Trp-|-Ser- bond.. In terms of biological role, forms an icosahedral capsid with a T=4 symmetry composed of 240 copies of the capsid protein surrounded by a lipid membrane through which penetrate 80 spikes composed of trimers of E1-E2 heterodimers. The capsid protein binds to the viral RNA genome at a site adjacent to a ribosome binding site for viral genome translation following genome release. Possesses a protease activity that results in its autocatalytic cleavage from the nascent structural protein. Following its self-cleavage, the capsid protein transiently associates with ribosomes, and within several minutes the protein binds to viral RNA and rapidly assembles into icosahedric core particles. The resulting nucleocapsid eventually associates with the cytoplasmic domain of the spike glycoprotein E2 at the cell membrane, leading to budding and formation of mature virions. In case of infection, new virions attach to target cells and after clathrin-mediated endocytosis their membrane fuses with the host endosomal membrane. This leads to the release of the nucleocapsid into the cytoplasm, followed by an uncoating event necessary for the genomic RNA to become accessible. The uncoating might be triggered by the interaction of capsid proteins with ribosomes. Binding of ribosomes would release the genomic RNA since the same region is genomic RNA-binding and ribosome-binding. Specifically inhibits interleukin-1 receptor-associated kinase 1/IRAK1-dependent signaling during viral entry, representing a means by which the alphaviruses may evade innate immune detection and activation prior to viral gene expression. Degrades host cyclic GMP-AMP synthase (CGAS) thereby inhibiting the cGAS-STING pathway. Its function is as follows. Provides the signal sequence for the translocation of the precursor of protein E3/E2 to the host endoplasmic reticulum. Furin-cleaved E3 remains associated with spike glycoprotein E1 and mediates pH protection of the latter during the transport via the secretory pathway. After virion release from the host cell, the assembly protein E3 is gradually released in the extracellular space. Plays a role in viral attachment to target host cell, by binding to the cell receptor MXRA8. Synthesized as a p62 precursor which is processed by furin at the cell membrane just before virion budding, giving rise to E2-E1 heterodimer. The p62-E1 heterodimer is stable, whereas E2-E1 is unstable and dissociate at low pH. p62 is processed at the last step, presumably to avoid E1 fusion activation before its final export to cell surface. E2 C-terminus contains a transitory transmembrane that would be disrupted by palmitoylation, resulting in reorientation of the C-terminal tail from lumenal to cytoplasmic side. This step is critical since E2 C-terminus is involved in budding by interacting with capsid proteins. This release of E2 C-terminus in cytoplasm occurs lately in protein export, and precludes premature assembly of particles at the endoplasmic reticulum membrane. Functionally, acts as a viroporin that participates in virus glycoprotein processing and transport to the plasma membrane, cell permeabilization and budding of viral particles. Disrupts the calcium homeostasis of the cell, probably at the endoplasmic reticulum level. This leads to cytoplasmic calcium elevation. Because of its lipophilic properties, the 6K protein is postulated to influence the selection of lipids that interact with the transmembrane domains of the glycoproteins, which, in turn, affects the deformability of the bilayer required for the extreme curvature that occurs as budding proceeds. Present in low amount in virions, about 3% compared to viral glycoproteins. In terms of biological role, class II viral fusion protein. Fusion activity is inactive as long as E1 is bound to E2 in mature virion. After virus attachment to target cell via host MXRA8 and endocytosis, acidification of the endosome induce dissociation of E1/E2 heterodimer and concomitant trimerization of the E1 subunits. This E1 trimer is fusion active, and promotes release of viral nucleocapsid in cytoplasm after endosome and viral membrane fusion. Efficient fusion requires the presence of cholesterol and sphingolipid in the target membrane. The sequence is that of Structural polyprotein from Chikungunya virus (strain Nagpur) (CHIKV).